We begin with the raw amino-acid sequence, 410 residues long: Phosphopentomutase (410 aa).

6 residues coordinate Mn(2+): Asp-10, Asp-309, His-314, Asp-350, His-351, and His-362.

Belongs to the phosphopentomutase family. Requires Mn(2+) as cofactor.

Its subcellular location is the cytoplasm. The enzyme catalyses 2-deoxy-alpha-D-ribose 1-phosphate = 2-deoxy-D-ribose 5-phosphate. The catalysed reaction is alpha-D-ribose 1-phosphate = D-ribose 5-phosphate. Its pathway is carbohydrate degradation; 2-deoxy-D-ribose 1-phosphate degradation; D-glyceraldehyde 3-phosphate and acetaldehyde from 2-deoxy-alpha-D-ribose 1-phosphate: step 1/2. Functionally, isomerase that catalyzes the conversion of deoxy-ribose 1-phosphate (dRib-1-P) and ribose 1-phosphate (Rib-1-P) to deoxy-ribose 5-phosphate (dRib-5-P) and ribose 5-phosphate (Rib-5-P), respectively. The sequence is that of Phosphopentomutase from Aliivibrio fischeri (strain ATCC 700601 / ES114) (Vibrio fischeri).